The chain runs to 56 residues: U-limacoditoxin(3)-Dv21 (56 aa).

An N-terminal signal peptide occupies residues 1–19 (MKKVIMLLLIFALFAYALS). 3 cysteine pairs are disulfide-bonded: cysteine 26–cysteine 41, cysteine 33–cysteine 46, and cysteine 40–cysteine 53.

Belongs to the limacoditoxin-22 family. Expressed by the venom secretory cell of the spine. The spine is a cuticular structure containing a single large nucleated venom-secreting cell at its base. It is an independent unit capable of producing, storing and injecting venom. On the back of D.vulnerans caterpillars, spines are grouped together by 50 to 100 to form scoli, of which there are eight in D.vulnerans.

The protein localises to the secreted. Its function is as follows. Probable toxin. Shows a moderate antiparasitic activity against the major pathogenic nematode of ruminants (H.contortus, IC(50)=22.1 uM). Does not show insecticidal activities. Does not induce increase in intracellular calcium in mouse DRG neurons, suggesting that it does not induce pain. This Doratifera vulnerans (Mottled cup moth) protein is U-limacoditoxin(3)-Dv21.